The following is an 89-amino-acid chain: MVKSAEVRRRKKSWVGKVVSDKMDKAIVIAIERRVQHPVYKKYFKKTTRLMAHDENNDAGIGDIVKVTECRPLSKRKSCRLVEVVEKAK.

It belongs to the universal ribosomal protein uS17 family. In terms of assembly, part of the 30S ribosomal subunit.

Its function is as follows. One of the primary rRNA binding proteins, it binds specifically to the 5'-end of 16S ribosomal RNA. This Chlorobium phaeobacteroides (strain BS1) protein is Small ribosomal subunit protein uS17.